A 181-amino-acid chain; its full sequence is Adenine phosphoribosyltransferase (181 aa).

The protein belongs to the purine/pyrimidine phosphoribosyltransferase family. Homodimer.

It localises to the cytoplasm. It catalyses the reaction AMP + diphosphate = 5-phospho-alpha-D-ribose 1-diphosphate + adenine. It functions in the pathway purine metabolism; AMP biosynthesis via salvage pathway; AMP from adenine: step 1/1. Its function is as follows. Catalyzes a salvage reaction resulting in the formation of AMP, that is energically less costly than de novo synthesis. This Cytophaga hutchinsonii (strain ATCC 33406 / DSM 1761 / CIP 103989 / NBRC 15051 / NCIMB 9469 / D465) protein is Adenine phosphoribosyltransferase.